The sequence spans 229 residues: 5'-methylthioadenosine/S-adenosylhomocysteine nucleosidase (229 aa).

The Proton acceptor role is filled by Glu12. Residues Gly78, Met152, and Met173 to Glu174 contribute to the substrate site. The active-site Proton donor is the Asp197.

The protein belongs to the PNP/UDP phosphorylase family. MtnN subfamily.

It catalyses the reaction S-adenosyl-L-homocysteine + H2O = S-(5-deoxy-D-ribos-5-yl)-L-homocysteine + adenine. The enzyme catalyses S-methyl-5'-thioadenosine + H2O = 5-(methylsulfanyl)-D-ribose + adenine. It carries out the reaction 5'-deoxyadenosine + H2O = 5-deoxy-D-ribose + adenine. The protein operates within amino-acid biosynthesis; L-methionine biosynthesis via salvage pathway; S-methyl-5-thio-alpha-D-ribose 1-phosphate from S-methyl-5'-thioadenosine (hydrolase route): step 1/2. Its function is as follows. Catalyzes the irreversible cleavage of the glycosidic bond in both 5'-methylthioadenosine (MTA) and S-adenosylhomocysteine (SAH/AdoHcy) to adenine and the corresponding thioribose, 5'-methylthioribose and S-ribosylhomocysteine, respectively. Also cleaves 5'-deoxyadenosine, a toxic by-product of radical S-adenosylmethionine (SAM) enzymes, into 5-deoxyribose and adenine. This chain is 5'-methylthioadenosine/S-adenosylhomocysteine nucleosidase, found in Oceanobacillus iheyensis (strain DSM 14371 / CIP 107618 / JCM 11309 / KCTC 3954 / HTE831).